The chain runs to 445 residues: Argininosuccinate synthase (445 aa).

Residues Ala-17–Ser-25 and Ala-43 contribute to the ATP site. An L-citrulline-binding site is contributed by Tyr-99. ATP is bound by residues Gly-129 and Thr-131. Thr-131, Asn-135, and Asp-136 together coordinate L-aspartate. Asn-135 is a binding site for L-citrulline. Residue Asp-136 coordinates ATP. 2 residues coordinate L-citrulline: Arg-139 and Ser-192. Residue Asp-194 coordinates ATP. Residues Thr-201, Glu-203, and Glu-280 each coordinate L-citrulline.

It belongs to the argininosuccinate synthase family. Type 2 subfamily. In terms of assembly, homotetramer.

It is found in the cytoplasm. The catalysed reaction is L-citrulline + L-aspartate + ATP = 2-(N(omega)-L-arginino)succinate + AMP + diphosphate + H(+). Its pathway is amino-acid biosynthesis; L-arginine biosynthesis; L-arginine from L-ornithine and carbamoyl phosphate: step 2/3. In Acidobacterium capsulatum (strain ATCC 51196 / DSM 11244 / BCRC 80197 / JCM 7670 / NBRC 15755 / NCIMB 13165 / 161), this protein is Argininosuccinate synthase.